The following is a 481-amino-acid chain: Xylulose kinase (481 aa).

A substrate-binding site is contributed by 81 to 82 (QH). Aspartate 239 functions as the Proton acceptor in the catalytic mechanism.

The protein belongs to the FGGY kinase family.

It catalyses the reaction D-xylulose + ATP = D-xylulose 5-phosphate + ADP + H(+). In terms of biological role, catalyzes the phosphorylation of D-xylulose to D-xylulose 5-phosphate. This is Xylulose kinase from Streptomyces coelicolor (strain ATCC BAA-471 / A3(2) / M145).